The chain runs to 194 residues: MSNIQLIVGLGNPGLEYKYTRHNAGTWLVENLARMHNCTLSLQSKFFGYTGRVTIGGQDIRLLIPTTYMNKSGQAVAALAGFYRIPPESILVAYDELDLPPGIAKFKLGGSSSQNGIRDIVSSLGNNKDFYRLRVGIGHPGHKGKVSGYVLGKAPAKEQEQMDAAIDEGVRCIEILIKDDMKKAMNRLHSFKAE.

A tRNA-binding site is contributed by Tyr-17. Residue His-22 is the Proton acceptor of the active site. TRNA-binding residues include Tyr-68, Asn-70, and Asn-115.

This sequence belongs to the PTH family. As to quaternary structure, monomer.

It is found in the cytoplasm. The catalysed reaction is an N-acyl-L-alpha-aminoacyl-tRNA + H2O = an N-acyl-L-amino acid + a tRNA + H(+). Its function is as follows. Hydrolyzes ribosome-free peptidyl-tRNAs (with 1 or more amino acids incorporated), which drop off the ribosome during protein synthesis, or as a result of ribosome stalling. Catalyzes the release of premature peptidyl moieties from peptidyl-tRNA molecules trapped in stalled 50S ribosomal subunits, and thus maintains levels of free tRNAs and 50S ribosomes. This chain is Peptidyl-tRNA hydrolase, found in Pseudoalteromonas atlantica (strain T6c / ATCC BAA-1087).